We begin with the raw amino-acid sequence, 842 residues long: Pentatricopeptide repeat-containing protein At3g23020 (842 aa).

Residues 40–61 (YVPGTHESDKGPQRSTRNGDRG) are disordered. A compositionally biased stretch (basic and acidic residues) spans 45 to 59 (HESDKGPQRSTRNGD). PPR repeat units follow at residues 186–220 (NVIH…GIKP), 221–255 (INST…GMQP), 256–290 (DEVT…ENKA), 297–331 (SSYT…GIVP), 332–362 (TTVT…MKLH), 366–400 (DTRT…GLKP), 401–435 (DPVS…NVEI), 436–470 (DEYT…GNMS), 474–500 (YSAN…CQEV), 504–538 (TVIE…GVTP), 539–573 (DKCT…GYVS), 574–608 (DCIP…NIEP), 609–643 (DVVV…GIPG), 644–674 (NSVI…LLQS), 682–712 (DVYT…MKQR), 716–750 (NEFT…KILT), 751–785 (DPLS…GIQP), and 786–820 (DDST…EIKR).

It belongs to the PPR family. P subfamily.

This chain is Pentatricopeptide repeat-containing protein At3g23020, found in Arabidopsis thaliana (Mouse-ear cress).